Reading from the N-terminus, the 134-residue chain is MAKYQCPDCQYIYDECKGEPHEGFQPNTNWGEIPEEWACPDCAVRDKIDFKMLADPRCEITQLKQNDPVIKQDNNIIEDTLSEPSILSAELEFTAEKISITDERENTPDNKVERRSQSQAVRRSSVKKIKNNKR.

Positions 1–53 constitute a Rubredoxin-like domain; that stretch reads MAKYQCPDCQYIYDECKGEPHEGFQPNTNWGEIPEEWACPDCAVRDKIDFKML. Residues C6, C9, C39, and C42 each coordinate Fe cation. A compositionally biased stretch (basic and acidic residues) spans 99–116; it reads SITDERENTPDNKVERRS. The tract at residues 99–134 is disordered; the sequence is SITDERENTPDNKVERRSQSQAVRRSSVKKIKNNKR. Residues 124–134 show a composition bias toward basic residues; the sequence is SSVKKIKNNKR.

Belongs to the rubredoxin family. Fe(3+) is required as a cofactor.

It is found in the cytoplasm. The protein operates within hydrocarbon metabolism; alkane degradation. Its function is as follows. Involved in the hydrocarbon hydroxylating system, which transfers electrons from NADH to rubredoxin reductase and then through rubredoxin to alkane 1 monooxygenase. This Pseudomonas putida (Arthrobacter siderocapsulatus) protein is Rubredoxin-2 (alkF).